We begin with the raw amino-acid sequence, 158 residues long: Rhombotin-2 (158 aa).

2 consecutive LIM zinc-binding domains span residues L28–Q90 and G92–L154.

As to expression, expression becomes restricted to the ventral blood island (VBI) as the embryo develops. In late neurula and early tailbud embryos, also expressed in the dorsal lateral plate (DLP), the site of definitive hematopoiesis in the tadpole. Expression in the DLP diminishes during tailbud stages. Expressed in circulating blood cells of tadpoles. Also expressed in non-hematopoietic sites, including the tailbud region and the central nervous system of early neurula embryos.

The protein localises to the nucleus. In terms of biological role, transcription factor that acts synergistically with tal1/scl and gata1 to specify embryonic dorsal mesoderm to a hematopoietic fate. Induces globin gene expression together with fgf. In Xenopus laevis (African clawed frog), this protein is Rhombotin-2.